The primary structure comprises 500 residues: Glutelin type-B 4 (500 aa).

An N-terminal signal peptide occupies residues 1–24 (MATIAFSRLSIYFCVLLLCHGSMA). 2 disulfides stabilise this stretch: Cys45/Cys78 and Cys121/Cys310. 2 consecutive Cupin type-1 domains span residues 50-245 (LQAF…LVAK) and 316-465 (LNIE…EQAR). The segment covering 481-493 (RYQQQTYPGFSNE) has biased composition (polar residues). Residues 481-500 (RYQQQTYPGFSNESENEALE) form a disordered region.

The protein belongs to the 11S seed storage protein (globulins) family. Hexamer; each subunit is composed of an acidic and a basic chain derived from a single precursor and linked by a disulfide bond. Expressed in endosperm (at protein level).

Its function is as follows. Seed storage protein. This is Glutelin type-B 4 (GLUB4) from Oryza sativa subsp. japonica (Rice).